Here is a 466-residue protein sequence, read N- to C-terminus: Histidine--tRNA ligase (466 aa).

This sequence belongs to the class-II aminoacyl-tRNA synthetase family. Homodimer.

It localises to the cytoplasm. It catalyses the reaction tRNA(His) + L-histidine + ATP = L-histidyl-tRNA(His) + AMP + diphosphate + H(+). In Xylella fastidiosa (strain M23), this protein is Histidine--tRNA ligase.